Consider the following 122-residue polypeptide: Small ribosomal subunit protein uS13 (122 aa).

Residues 94–122 form a disordered region; the sequence is KQLPVRGQRTHTNARTRKGKAKPIAGKKK.

This sequence belongs to the universal ribosomal protein uS13 family. As to quaternary structure, part of the 30S ribosomal subunit. Forms a loose heterodimer with protein S19. Forms two bridges to the 50S subunit in the 70S ribosome.

Located at the top of the head of the 30S subunit, it contacts several helices of the 16S rRNA. In the 70S ribosome it contacts the 23S rRNA (bridge B1a) and protein L5 of the 50S subunit (bridge B1b), connecting the 2 subunits; these bridges are implicated in subunit movement. Contacts the tRNAs in the A and P-sites. The sequence is that of Small ribosomal subunit protein uS13 from Methylorubrum populi (strain ATCC BAA-705 / NCIMB 13946 / BJ001) (Methylobacterium populi).